The chain runs to 173 residues: Ribulose bisphosphate carboxylase small subunit, chloroplastic 5 (173 aa).

The N-terminal 49 residues, 1–49, are a transit peptide targeting the chloroplast; the sequence is MASIPATVATVAQANMVAPFTGLKSNAAFPVTKKVNDFSTLPSNGGRVQ.

The protein belongs to the RuBisCO small chain family. In terms of assembly, heterohexadecamer of 8 large and 8 small subunits.

The protein resides in the plastid. It is found in the chloroplast. Its function is as follows. RuBisCO catalyzes two reactions: the carboxylation of D-ribulose 1,5-bisphosphate, the primary event in carbon dioxide fixation, as well as the oxidative fragmentation of the pentose substrate. Both reactions occur simultaneously and in competition at the same active site. Although the small subunit is not catalytic it is essential for maximal activity. The polypeptide is Ribulose bisphosphate carboxylase small subunit, chloroplastic 5 (Flaveria pringlei).